A 230-amino-acid chain; its full sequence is Ribonuclease 3 (230 aa).

The RNase III domain occupies 1–134 (MKQLEELLST…FLGALLLDKG (134 aa)). Residue Glu47 coordinates Mg(2+). Asp51 is a catalytic residue. Mg(2+) contacts are provided by Asp120 and Glu123. Residue Glu123 is part of the active site. The 70-residue stretch at 160–229 (DYKTCLQEFL…AKNALAQLSE (70 aa)) folds into the DRBM domain.

It belongs to the ribonuclease III family. As to quaternary structure, homodimer. Requires Mg(2+) as cofactor.

The protein localises to the cytoplasm. The catalysed reaction is Endonucleolytic cleavage to 5'-phosphomonoester.. Functionally, digests double-stranded RNA. Involved in the processing of primary rRNA transcript to yield the immediate precursors to the large and small rRNAs (23S and 16S). Processes some mRNAs, and tRNAs when they are encoded in the rRNA operon. Processes pre-crRNA and tracrRNA of type II CRISPR loci if present in the organism. The protein is Ribonuclease 3 of Streptococcus pyogenes serotype M2 (strain MGAS10270).